Here is a 955-residue protein sequence, read N- to C-terminus: Kinesin-like protein K39 (955 aa).

A Kinesin motor domain is found at 12–392 (RVKVSVRVRP…LRYASRARDI (381 aa)). Residue 122 to 129 (GQTGSGKT) participates in ATP binding. Positions 426–955 (PAYVSELKKK…EERAAELASQ (530 aa)) form a coiled coil. Disordered stretches follow at residues 682–712 (ELDA…RESE) and 725–955 (TAAA…LASQ). 7 repeat units span residues 704–742 (LEQQ…TRAT), 743–781 (LEQQ…TRAT), 782–820 (LEQQ…TRAT), 821–859 (LEQQ…TRAT), 860–898 (LEQQ…TRAT), 899–937 (LEQQ…TRAA), and 938–955 (LEQQ…LASQ). The tract at residues 704 to 955 (LEQQLRESEE…EERAAELASQ (252 aa)) is 7 X 39 AA approximate tandem repeats. 5 stretches are compositionally biased toward basic and acidic residues: residues 785-794 (QLRDSEERAA), 824-833 (QLRDSEERAA), 863-872 (QLRESEERAA), 902-911 (QLRDSEERAA), and 941-955 (QLRD…LASQ).

The protein belongs to the TRAFAC class myosin-kinesin ATPase superfamily. Kinesin family.

It is found in the cytoplasm. Its subcellular location is the cytoskeleton. The sequence is that of Kinesin-like protein K39 (KIN) from Leishmania chagasi.